The primary structure comprises 143 residues: Large ribosomal subunit protein uL11 (143 aa).

The protein belongs to the universal ribosomal protein uL11 family. In terms of assembly, part of the ribosomal stalk of the 50S ribosomal subunit. Interacts with L10 and the large rRNA to form the base of the stalk. L10 forms an elongated spine to which L12 dimers bind in a sequential fashion forming a multimeric L10(L12)X complex. One or more lysine residues are methylated.

Forms part of the ribosomal stalk which helps the ribosome interact with GTP-bound translation factors. The protein is Large ribosomal subunit protein uL11 of Azoarcus sp. (strain BH72).